The chain runs to 50 residues: GEWEIIDIGPFTQNLGKFAVDEENKIGQYGRLTFNKVIRPCMKKTIYEEN.

In terms of assembly, heterodimer of an A chain and a B chain.

Its function is as follows. Taste-modifying protein; intensely sweet-tasting protein. This Dioscoreophyllum cumminsii (Serendipity berry) protein is Monellin chain B.